The chain runs to 138 residues: Putative pre-16S rRNA nuclease (138 aa).

This sequence belongs to the YqgF nuclease family.

It localises to the cytoplasm. Functionally, could be a nuclease involved in processing of the 5'-end of pre-16S rRNA. The protein is Putative pre-16S rRNA nuclease of Escherichia coli O45:K1 (strain S88 / ExPEC).